The following is a 286-amino-acid chain: Phycobilisome 31.8 kDa linker polypeptide, phycoerythrin-associated, rod (286 aa).

Residues Pro-2–Leu-179 enclose the PBS-linker domain. The 56-residue stretch at Gly-231–Val-286 folds into the CpcD-like domain.

This sequence belongs to the phycobilisome linker protein family. As to quaternary structure, the phycobilisome is a hemidiscoidal structure that is composed of two distinct substructures: a core complex and six rods radiating from the core.

The protein resides in the cellular thylakoid membrane. Functionally, rod linker protein, associated with phycoerythrocyanin. Linker polypeptides determine the state of aggregation and the location of the disk-shaped phycobiliprotein units within the phycobilisome and modulate their spectroscopic properties in order to mediate a directed and optimal energy transfer. The sequence is that of Phycobilisome 31.8 kDa linker polypeptide, phycoerythrin-associated, rod (cpeC) from Microchaete diplosiphon (Fremyella diplosiphon).